The primary structure comprises 184 residues: MNHTTQTQLFDFFERFKAHWQTQKKSLPQAIFEPQWISPCQIGEVENQLIFWSPIKREPALDMSNIEQALDIKLHPSIVDFFCSAYSAGLPAVYQDHPIELIQAWNDEDFNLLQENMLAHFMMQKRLKQPASMFIASCSDEMQIVSVLNATGEVQLETLGKGQEAILAENLADFLATLTPVIIE.

Belongs to the Syd family.

It is found in the cell inner membrane. Functionally, interacts with the SecY protein in vivo. May bind preferentially to an uncomplexed state of SecY, thus functioning either as a chelating agent for excess SecY in the cell or as a regulatory factor that negatively controls the translocase function. The polypeptide is Protein Syd (Psychromonas ingrahamii (strain DSM 17664 / CCUG 51855 / 37)).